The chain runs to 395 residues: Extracellular cysteine protease (395 aa).

A signal peptide spans 1-30 (MKKKLSYMITIMLAFTLSLALGLFFNSAHA). The propeptide occupies 31–221 (DSLPQKNGAN…TLEYQSTRNE (191 aa)). Active-site residues include C245, H341, and N362.

It belongs to the peptidase C47 family. Post-translationally, proteolytically cleaved.

It localises to the secreted. The protein resides in the cell wall. Cysteine protease able to cleave elastin, insulin, myoglobin, fibronectin, fibrinogen, HMW-kininogen, alpha-1-protease inhibitor and alpha-1-antitrypsin. Along with other extracellular proteases may contribute to the colonization and infection of human tissues. In Staphylococcus epidermidis (strain ATCC 35984 / DSM 28319 / BCRC 17069 / CCUG 31568 / BM 3577 / RP62A), this protein is Extracellular cysteine protease (ecpA).